We begin with the raw amino-acid sequence, 56 residues long: Alpha-conotoxin EpI (56 aa).

The signal sequence occupies residues 1 to 16; that stretch reads MFTVFLLVVLATTVVS. The propeptide occupies 17 to 39; that stretch reads FTSDRASDSRKDAASGLIALTIK. Disulfide bonds link cysteine 41–cysteine 47 and cysteine 42–cysteine 55. Residues 43–45 are ser-Xaa-Pro motif, crucial for potent interaction with nAChR; it reads SDP. At tyrosine 54 the chain carries Sulfotyrosine. Cysteine 55 is modified (cysteine amide).

The protein belongs to the conotoxin A superfamily. Both tyrosine sulfation and C-terminal amidation are important for activity and structure stability. Expressed by the venom duct.

It localises to the secreted. Its function is as follows. Alpha-conotoxins act on postsynaptic membranes, they bind to the nicotinic acetylcholine receptors (nAChR) and thus inhibit them. This native peptide blocks mammalian nicotinic acetylcholine receptors composed of alpha-3-beta-2/CHRNA3-CHRNB2 and alpha-3-beta-4/CHRNA3-CHRNB4 subunits. This is Alpha-conotoxin EpI from Conus episcopatus (Bishop's cone).